A 158-amino-acid chain; its full sequence is METQRASLSLGRWSLWLLLLGLALPSASAQALSYREAVLRAVDQFNERSSEANLYRLLELDPPPKEDDENPNIPKPVSFRVKETVCPRTSQQPAEQCDFKENGLVKQCVGTVTLDAVKGKINVTCEELQSVGRFKRFRKKFKKLFKKLSPVIPLLHLG.

The N-terminal stretch at 1–29 (METQRASLSLGRWSLWLLLLGLALPSASA) is a signal peptide. A propeptide spanning residues 30–131 (QALSYREAVL…NVTCEELQSV (102 aa)) is cleaved from the precursor. Intrachain disulfides connect C86-C97 and C108-C125.

It belongs to the cathelicidin family.

The protein resides in the secreted. Functionally, exerts a potent antimicrobial activity against Gram-negative and Gram-positive bacteria, including methicillin-resistant Staphylococcus aureus, and fungi. The polypeptide is Cathelicidin-6 (CATHL6) (Bos taurus (Bovine)).